The sequence spans 543 residues: Cysteine/serine-rich nuclear protein 2 (543 aa).

An N-acetylmethionine modification is found at Met-1. 3 disordered regions span residues 1–51 (MDAF…SFTP), 281–305 (KRQV…LTGA), and 488–543 (DCNP…PLAV). A compositionally biased stretch (low complexity) spans 31-40 (SSDSADSCDS). 2 stretches are compositionally biased toward polar residues: residues 42-51 (NPPTTASFTP) and 296-305 (PTASCSLTGA).

This sequence belongs to the AXUD1 family.

It is found in the nucleus. Binds to the consensus sequence 5'-AGAGTG-3' and has transcriptional activator activity. May play a role in apoptosis. The sequence is that of Cysteine/serine-rich nuclear protein 2 (CSRNP2) from Homo sapiens (Human).